The sequence spans 237 residues: MLRVAEPREPRVEAGGRSPWAAPPTQSKRLTSFLIQDILRDRAERHGGHSGNPQHSPDPRRDSAPEPDKAGGRGVAPEDPPSIRHSPAETPTEPESDAHFETYLLDCEHNPGDLASAPQVTKQPQKRSRAAFSHTQVIELERKFSHQKYLSAPERAHLAKNLKLTETQVKIWFQNRRYKTKRKQLSEDLGVLEKNSPLSLPALKDDSLPSTSLVSVYTSYPYYPYLYCLGSWHPSFW.

A compositionally biased stretch (basic and acidic residues) spans 1–14 (MLRVAEPREPRVEA). Disordered regions lie at residues 1-96 (MLRV…EPES) and 108-130 (EHNP…RSRA). Residues 24-34 (PTQSKRLTSFL) show a composition bias toward polar residues. Composition is skewed to basic and acidic residues over residues 38–47 (ILRDRAERHG) and 57–71 (PDPR…DKAG). The segment at residues 125 to 184 (QKRSRAAFSHTQVIELERKFSHQKYLSAPERAHLAKNLKLTETQVKIWFQNRRYKTKRKQ) is a DNA-binding region (homeobox).

This sequence belongs to the NK-3 homeobox family. Interacts with serum response factor (SRF). Interacts with SPDEF. Interacts with WDR77. Interacts with TOPORS which polyubiquitinates NKX3-1 and induces its proteasomal degradation. Interacts with FEM1B. In terms of processing, ubiquitinated by TOPORS; monoubiquitinated at several residues and also polyubiquitinated on single residues. As to expression, expressed mostly in the male urogenital tract, with highest expression in the epithelial cells lining the ducts of anterior, dorsolateral and ventral prostate and in the bulbourethral gland, and much lower in the seminal vesicle and the testis. Expression in the prostate increases during sexual maturation and is drastically reduced following castration. Expressed also in brain (hippocampus and external granular layer of the cerebral cortex), kidney (intralobular arteries), thymus and adrenal and salivary glands.

It is found in the nucleus. In terms of biological role, transcription factor, which binds preferentially the consensus sequence 5'-TAAGT[AG]-3' and can behave as a transcriptional repressor. Plays an important role in normal prostate development, regulating proliferation of glandular epithelium and in the formation of ducts in prostate. Acts as a tumor suppressor controlling prostate carcinogenesis, as shown by the ability to suppress growth and tumorigenicity of prostate carcinoma cells. Plays a role in the formation of minor salivary glands (particularly palatine and lingual glands). This chain is Homeobox protein Nkx-3.1, found in Mus musculus (Mouse).